Here is a 99-residue protein sequence, read N- to C-terminus: Large ribosomal subunit protein uL23cz/uL23cy (99 aa).

Residues M1 to R37 form a disordered region. Basic and acidic residues predominate over residues K12 to Q21. The segment covering Y22–K32 has biased composition (polar residues).

Belongs to the universal ribosomal protein uL23 family. In terms of assembly, part of the 50S ribosomal subunit.

The protein resides in the plastid. It is found in the chloroplast. Its function is as follows. Binds to 23S rRNA. The chain is Large ribosomal subunit protein uL23cz/uL23cy (rpl23-A) from Selaginella uncinata (Blue spike-moss).